Consider the following 98-residue polypeptide: NADH-ubiquinone oxidoreductase chain 4L (98 aa).

The next 3 membrane-spanning stretches (helical) occupy residues 1 to 21 (MSIVYMNVMLAFMIALIGTLL), 29 to 49 (SLMCLEGMMLAMYIFISLISL), and 59 to 79 (VPLIILVFAACEAALGLALLV).

The protein belongs to the complex I subunit 4L family. In terms of assembly, core subunit of respiratory chain NADH dehydrogenase (Complex I) which is composed of 45 different subunits.

Its subcellular location is the mitochondrion inner membrane. It carries out the reaction a ubiquinone + NADH + 5 H(+)(in) = a ubiquinol + NAD(+) + 4 H(+)(out). Functionally, core subunit of the mitochondrial membrane respiratory chain NADH dehydrogenase (Complex I) which catalyzes electron transfer from NADH through the respiratory chain, using ubiquinone as an electron acceptor. Part of the enzyme membrane arm which is embedded in the lipid bilayer and involved in proton translocation. This Hemiechinus auritus (Long-eared hedgehog) protein is NADH-ubiquinone oxidoreductase chain 4L (MT-ND4L).